Here is a 458-residue protein sequence, read N- to C-terminus: tRNA modification GTPase MnmE (458 aa).

Residues Arg-26, Glu-88, and Arg-127 each contribute to the (6S)-5-formyl-5,6,7,8-tetrahydrofolate site. Residues 224-378 (GLSTAIIGRP…IEDRINQLFF (155 aa)) enclose the TrmE-type G domain. K(+) is bound at residue Asn-234. GTP contacts are provided by residues 234 to 239 (NVGKSS), 253 to 259 (TDIAGTT), and 278 to 281 (DTAG). Ser-238 serves as a coordination point for Mg(2+). K(+)-binding residues include Thr-253, Ile-255, and Thr-258. Thr-259 is a binding site for Mg(2+). Lys-458 is a binding site for (6S)-5-formyl-5,6,7,8-tetrahydrofolate.

It belongs to the TRAFAC class TrmE-Era-EngA-EngB-Septin-like GTPase superfamily. TrmE GTPase family. In terms of assembly, homodimer. Heterotetramer of two MnmE and two MnmG subunits. K(+) is required as a cofactor.

Its subcellular location is the cytoplasm. Exhibits a very high intrinsic GTPase hydrolysis rate. Involved in the addition of a carboxymethylaminomethyl (cmnm) group at the wobble position (U34) of certain tRNAs, forming tRNA-cmnm(5)s(2)U34. The sequence is that of tRNA modification GTPase MnmE from Streptococcus pyogenes serotype M4 (strain MGAS10750).